The following is a 290-amino-acid chain: UPF0761 membrane protein CKO_03126 (290 aa).

6 helical membrane-spanning segments follow: residues 44–64 (LLSLVPLIAVVFALFAAFPMF), 104–124 (VGACGLIVTALLLMYAIDSAL), 140–160 (FAVYWMILTLGPLLAGASLAI), 183–203 (VFPLILSWISFWLLYSIVPTT), 210–230 (AVVGAFVAAVLFEAGKKGFAL), and 244–264 (VLAVIPILFVWVYWTWCIVLL).

Belongs to the UPF0761 family.

It localises to the cell inner membrane. The protein is UPF0761 membrane protein CKO_03126 of Citrobacter koseri (strain ATCC BAA-895 / CDC 4225-83 / SGSC4696).